A 968-amino-acid polypeptide reads, in one-letter code: MIPELGRRPMHRGNEDSSFGDDYEKEIGVLLGEQQRRQVEADELERELNLFRSGSAPPTVDGSVSAAGGLFSGGGGAPFLEFGGVNKGNGFGGDDEEFRKDPAYLSYYYANMKLNPRLPPPLMSREDLRVAQRLKGSNNVLGGVGDRRKVNDNRSLFSMPPGFEGEKTGASASEWDANGLIGLPGLGLGGKQKSFADIFQADMGHGHPVAQQPSRPASRNTFDENVDSNNNLSPSASQGIGAPSPYSYAAVLGSSLSRNGTPDPQAIARVPSPCLTPIGSGRMSSNDKRNTSNQSPFNGVTSGLNESSDLVNALSGLNLSCSVGLDDRSQAEQDVEKVRNYMFGLQGGHNEVNQHEFPNKSDQAHKATGSLRNSQLRGPHGSAYNGGVGLANPYQQLDSPNYCLNNYALNPAVASMMANQLGNNNFAPMYDNVSALGFSGMDSRHHGRGFVSSGQNLSESRNLGRFSNRMMGGGAGLQSHMVDPMYNQYADSLDLLNDPSMDRNFMGGSSYMDMLELQRAYLGAQKSQYGVPYKSGSPNSHSYYGSPTFGSNMSYPGSPLAHHGMPNSLMSPYSPMRRDEVNMRFPSATRNYSGGLMGSWHMDASFDEGFGSSMLEEFKSNKTRGFELSEIAGHVVEFSSDQYGSRFIQQKLETATTDEKNMVYEEIMPQALVLMTDVFGNYVIQKFFEHGLPPQRRELAEKLFDHVLPLSLQMYGCRVIQKAIEVVDLDQKIKMVKELDGHVMRCVRDQNGNHVVQKCIECVPEENIEFIISTFFGHVVTLSTHPYGCRVIQRVLEHCHDPDTQSKVMEEILSTVSMLAQDQYGNYVVQHVLEHGKPDERTVIIKELAGKIVQMSQQKFASNVVEKCLTFGGPEERELLVNEMLGTTDENEPLQAMMKDQFANYVVQKVLETCDDQQRELILTRIKVHLTALKKYTYGKHVVARIEKLVAAGERRMALQSLTQPQMA.

2 disordered regions span residues 1 to 25 and 138 to 171; these read MIPELGRRPMHRGNEDSSFGDDYEK and NNVLGGVGDRRKVNDNRSLFSMPPGFEGEKTGAS. The residue at position 194 (Ser194) is a Phosphoserine. 3 disordered regions span residues 204–240, 260–303, and 360–382; these read GHGHPVAQQPSRPASRNTFDENVDSNNNLSPSASQGI, GTPD…VTSG, and KSDQAHKATGSLRNSQLRGPHGS. Composition is skewed to polar residues over residues 211-220 and 227-238; these read QQPSRPASRN and DSNNNLSPSASQ. Residue Thr261 is modified to Phosphothreonine. Residues 291–303 are compositionally biased toward polar residues; the sequence is TSNQSPFNGVTSG. The PUM-HD domain occupies 610-950; the sequence is FGSSMLEEFK…HVVARIEKLV (341 aa). Pumilio repeat units lie at residues 630–665, 666–701, 702–737, 738–773, 774–810, 811–846, 847–882, and 883–924; these read EIAGHVVEFSSDQYGSRFIQQKLETATTDEKNMVYE, EIMPQALVLMTDVFGNYVIQKFFEHGLPPQRRELAE, KLFDHVLPLSLQMYGCRVIQKAIEVVDLDQKIKMVK, ELDGHVMRCVRDQNGNHVVQKCIECVPEENIEFIIS, TFFGHVVTLSTHPYGCRVIQRVLEHCHDPDTQSKVME, EILSTVSMLAQDQYGNYVVQHVLEHGKPDERTVIIK, ELAGKIVQMSQQKFASNVVEKCLTFGGPEERELLVN, and EMLG…LILT.

It is found in the cytoplasm. Sequence-specific RNA-binding protein that regulates translation and mRNA stability by binding the 3'-UTR of target mRNAs. Binds the APUM-binding elements (APBEs) in the 3'-UTR mRNA sequence of CLV1, PNH, WUS and FAS2. This chain is Pumilio homolog 1 (APUM1), found in Arabidopsis thaliana (Mouse-ear cress).